The sequence spans 167 residues: 6,7-dimethyl-8-ribityllumazine synthase (167 aa).

Residues phenylalanine 23, 57 to 59 (TYE), and 81 to 83 (AVI) each bind 5-amino-6-(D-ribitylamino)uracil. 86-87 (GT) is a binding site for (2S)-2-hydroxy-3-oxobutyl phosphate. The active-site Proton donor is histidine 89. A 5-amino-6-(D-ribitylamino)uracil-binding site is contributed by phenylalanine 119. (2S)-2-hydroxy-3-oxobutyl phosphate is bound at residue arginine 133.

The protein belongs to the DMRL synthase family.

It catalyses the reaction (2S)-2-hydroxy-3-oxobutyl phosphate + 5-amino-6-(D-ribitylamino)uracil = 6,7-dimethyl-8-(1-D-ribityl)lumazine + phosphate + 2 H2O + H(+). It functions in the pathway cofactor biosynthesis; riboflavin biosynthesis; riboflavin from 2-hydroxy-3-oxobutyl phosphate and 5-amino-6-(D-ribitylamino)uracil: step 1/2. Catalyzes the formation of 6,7-dimethyl-8-ribityllumazine by condensation of 5-amino-6-(D-ribitylamino)uracil with 3,4-dihydroxy-2-butanone 4-phosphate. This is the penultimate step in the biosynthesis of riboflavin. This is 6,7-dimethyl-8-ribityllumazine synthase from Myxococcus xanthus (strain DK1622).